A 98-amino-acid polypeptide reads, in one-letter code: NADH-ubiquinone oxidoreductase chain 4L (98 aa).

3 helical membrane-spanning segments follow: residues 1-21 (MNLI…GLIF), 26-46 (IINI…LFVL), and 61-81 (LYIL…VVIL).

Belongs to the complex I subunit 4L family.

It localises to the mitochondrion membrane. The catalysed reaction is a ubiquinone + NADH + 5 H(+)(in) = a ubiquinol + NAD(+) + 4 H(+)(out). Core subunit of the mitochondrial membrane respiratory chain NADH dehydrogenase (Complex I) that is believed to belong to the minimal assembly required for catalysis. Complex I functions in the transfer of electrons from NADH to the respiratory chain. The immediate electron acceptor for the enzyme is believed to be ubiquinone. This Dictyostelium citrinum (Slime mold) protein is NADH-ubiquinone oxidoreductase chain 4L (nad4L).